Reading from the N-terminus, the 986-residue chain is Ephrin type-B receptor 2 (986 aa).

A signal peptide spans 1-18; it reads MAVRRLGAALLLLPLLAA. Topologically, residues 19-543 are extracellular; sequence VEETLMDSTT…QTSIKEKLPL (525 aa). The 183-residue stretch at 20 to 202 folds into the Eph LBD domain; the sequence is EETLMDSTTA…FYRKCPRIIQ (183 aa). 2 disulfides stabilise this stretch: C62/C184 and C97/C107. 4 N-linked (GlcNAc...) asparagine glycosylation sites follow: N265, N336, N428, and N482. Fibronectin type-III domains are found at residues 324–434 and 435–530; these read IPSA…TNQA and APSA…TMTE. A helical transmembrane segment spans residues 544-564; that stretch reads IVGSSAAGLVFLIAVVVIAIV. The Cytoplasmic segment spans residues 565–986; sequence CNRRGFERAD…QMNQIQSVEV (422 aa). Residues 621–884 form the Protein kinase domain; sequence VKIEQVIGAG…QIVNTLDKMI (264 aa). Residues 627 to 635 and K653 each bind ATP; that span reads IGAGEFGEV. Catalysis depends on D746, which acts as the Proton acceptor. A Glycyl lysine isopeptide (Lys-Gly) (interchain with G-Cter in ubiquitin) cross-link involves residue K891. The SAM domain occupies 913-977; sequence TSFNTVDEWL…LNSIQVMRAQ (65 aa). The PDZ-binding motif lies at 984–986; that stretch reads VEV.

It belongs to the protein kinase superfamily. Tyr protein kinase family. Ephrin receptor subfamily. In terms of assembly, heterotetramer upon binding of the ligand. The heterotetramer is composed of an ephrin dimer and a receptor dimer. Interacts (via PDZ-binding motif) with GRIP1 and PICK1 (via PDZ domain). Interacts with ARHGEF15; mediates ARHGEF15 phosphorylation, ubiquitination and degradation by the proteasome. Interacts with AQP1; involved in endolymph production in the inner ear. Interacts with EFNA5. Interacts with SPSB1. Interacts with SPSB4. Interacts with SH2D3C. In terms of processing, autophosphorylated; ligand binding stimulates autophosphorylation on tyrosine residues. Post-translationally, ligand binding induces cleavage by matrix metalloproteinases (MMPs) such as MMP7/MMP9, producing an EphB2/N-terminal fragment (NTF) and a C-terminal long fragment (EphB2-LF). EphB2-LF is further cleaved by MMPs, producing EphB2/CTF1 which is further cleaved by the PS1/gamma-secretase producing EphB2/CTF2. Polyubiquitinated; ligand binding stimulates ubiquitination. Ubiquitinated by RNF186 at Lys-891, mainly through 'Lys-27'-linked polyubiquitin chains. Ubiquitinated by CRL2(KLHDC2) E3 ligase complex. Expressed in the epithelial dark cells of the inner ear. Expressed in the region of the proximal tubules of the kidney nephron. Expressed in myogenic progenitor cells.

It is found in the cell membrane. Its subcellular location is the cell projection. The protein localises to the axon. It localises to the dendrite. The enzyme catalyses L-tyrosyl-[protein] + ATP = O-phospho-L-tyrosyl-[protein] + ADP + H(+). In terms of biological role, receptor tyrosine kinase which binds promiscuously transmembrane ephrin-B family ligands residing on adjacent cells, leading to contact-dependent bidirectional signaling into neighboring cells. The signaling pathway downstream of the receptor is referred to as forward signaling while the signaling pathway downstream of the ephrin ligand is referred to as reverse signaling. Functions in axon guidance during development. Involved in the guidance of commissural axons, that form a major interhemispheric connection between the 2 temporal lobes of the cerebral cortex. Also involved in guidance of contralateral inner ear efferent growth cones at the midline and of retinal ganglion cell axons to the optic disk. In addition to axon guidance, also regulates dendritic spines development and maturation and stimulates the formation of excitatory synapses. Upon activation by EFNB1, abolishes the ARHGEF15-mediated negative regulation on excitatory synapse formation. Controls other aspects of development including angiogenesis, palate development and in inner ear development through regulation of endolymph production. Forward and reverse signaling through the EFNB2/EPHB2 complex regulate movement and adhesion of cells that tubularize the urethra and septate the cloaca. May function as a tumor suppressor. May be involved in the regulation of platelet activation and blood coagulation. This Mus musculus (Mouse) protein is Ephrin type-B receptor 2.